A 187-amino-acid chain; its full sequence is NADH-quinone oxidoreductase subunit B (187 aa).

Residues Cys46, Cys47, Cys112, and Cys141 each coordinate [4Fe-4S] cluster.

The protein belongs to the complex I 20 kDa subunit family. NDH-1 is composed of 14 different subunits. Subunits NuoB, C, D, E, F, and G constitute the peripheral sector of the complex. Requires [4Fe-4S] cluster as cofactor.

It localises to the cell inner membrane. It carries out the reaction a quinone + NADH + 5 H(+)(in) = a quinol + NAD(+) + 4 H(+)(out). In terms of biological role, NDH-1 shuttles electrons from NADH, via FMN and iron-sulfur (Fe-S) centers, to quinones in the respiratory chain. The immediate electron acceptor for the enzyme in this species is believed to be ubiquinone. Couples the redox reaction to proton translocation (for every two electrons transferred, four hydrogen ions are translocated across the cytoplasmic membrane), and thus conserves the redox energy in a proton gradient. This is NADH-quinone oxidoreductase subunit B from Myxococcus xanthus (strain DK1622).